The primary structure comprises 341 residues: Probable long-chain-alcohol O-fatty-acyltransferase 1 (341 aa).

The next 8 membrane-spanning stretches (helical) occupy residues 7 to 27 (NLIEVWISALISLSYCYYISS), 36 to 56 (LLSILPVCILFLVLPLFLSCV), 58 to 78 (FCAISVLFLSWLANFKLLLFA), 120 to 140 (PMPKWVLAVKILVLGVLLHVY), 149 to 169 (FVVLALYCLHIYLEVELVLVF), 233 to 253 (MFAGVMASFFVSGLMHELLYF), 261 to 281 (TWEVTCFFVLHGAATATEIAV), and 293 to 313 (AVSGLVVLTFVSVTGVWLFLA).

This sequence belongs to the wax synthase family.

The protein resides in the membrane. It carries out the reaction a long chain fatty alcohol + a fatty acyl-CoA = a wax ester + CoA. Functionally, catalyzes the final step in the synthesis of long-chain linear esters (waxes). In Arabidopsis thaliana (Mouse-ear cress), this protein is Probable long-chain-alcohol O-fatty-acyltransferase 1 (AT1).